The following is a 104-amino-acid chain: uncharacterized protein (104 aa).

The first 23 residues, 1-23 (MDIHDYVELIALAFWVISVVSVG), serve as a signal peptide directing secretion.

This is an uncharacterized protein from Lactobacillus helveticus (Lactobacillus suntoryeus).